The sequence spans 2528 residues: Reducing polyketide synthase PKS1 (2528 aa).

One can recognise a Ketosynthase family 3 (KS3) domain in the interval 11–436; sequence ITPIAVVGMS…GANVHAILES (426 aa). Residues Cys-186, His-321, and His-359 each act as for beta-ketoacyl synthase activity in the active site. The segment at 573-868 is malonyl-CoA:ACP transacylase (MAT); sequence FVFTGQGAQW…LGGPISQVID (296 aa). Residues 954 to 1092 form an N-terminal hotdog fold region; sequence LDLIGVFDVH…GLISVLKSSK (139 aa). A PKS/mFAS DH domain is found at 954-1278; it reads LDLIGVFDVH…LVALDRPNSS (325 aa). The tract at residues 956–1277 is dehydratase (DH) domain; the sequence is LIGVFDVHSS…TLVALDRPNS (322 aa). The Proton acceptor; for dehydratase activity role is filled by His-986. A C-terminal hotdog fold region spans residues 1122–1278; the sequence is KTEWDVKDMY…LVALDRPNSS (157 aa). Asp-1187 serves as the catalytic Proton donor; for dehydratase activity. The enoyl reductase (ER) domain stretch occupies residues 1827 to 2139; it reads GLLDSLHFTV…TGRHMGKMVA (313 aa). The interval 2164–2341 is ketoreductase (KR) domain; the sequence is ASYLLVGGVG…ATVIDIGAVH (178 aa). One can recognise a Carrier domain in the interval 2442–2519; the sequence is SAVTIVLSAL…ALAVKIAARS (78 aa). O-(pantetheine 4'-phosphoryl)serine is present on Ser-2479.

Its pathway is mycotoxin biosynthesis. In terms of biological role, reducing polyketide synthase (PKS); part of the Tox1A locus, one of the 2 loci that mediate the biosynthesis of T-toxin, a family of linear polyketides 37 to 45 carbons in length, of which the major component is 41 carbons, and which leads to high virulence to maize. One of the PKSs (PKS1 or PKS2) could synthesize a precursor, used subsequently by the other PKS as starter unit, to add additional carbons. Variability in the length of the final carbon backbone C35-47 could be achieved by varying the number of condensation cycles, or use of different starter or extender units or might be due to decarboxylation of the penultimate product, catalyzed by DEC1. Additional proteins are required for the biosynthesis of T-toxin, including oxidoreductases RED1, RED2, RED3, LAM1 and OXI1, as well as esterase TOX9. The protein is Reducing polyketide synthase PKS1 of Cochliobolus heterostrophus (strain C4 / ATCC 48331 / race T) (Southern corn leaf blight fungus).